The sequence spans 158 residues: Secreted RxLR effector protein 131 (158 aa).

Positions 1-20 (MRQIPLVVVLLLAYAARLQG) are cleaved as a signal peptide. The short motif at 39 to 57 (RDLDGSTTSMSVNVDDEER) is the RxLR-dEER element. The segment at 120–158 (KGNVKYLAIIYVICILSVLGILGTVFAINRNISNQYIHE) is host BKI1-binding. The helical transmembrane segment at 127-147 (AIIYVICILSVLGILGTVFAI) threads the bilayer. Asn-150 is a glycosylation site (N-linked (GlcNAc...) asparagine).

Belongs to the RxLR effector family. As to quaternary structure, interacts with host BKI1.

It localises to the secreted. The protein localises to the host cell membrane. Its function is as follows. Secreted effector that suppresses pathogen-associated molecular pattern (PAMP)-triggered immunity (PTI) in host plants. Suppresses both defense-related brassinosteroid (BR) and ERECTA (ER) signaling pathways in planta by interacting with host BRI1 kinase inhibitor 1 (BKI1) at the host plasma membrane, leading to a host dwarf phenotype. The sequence is that of Secreted RxLR effector protein 131 from Plasmopara viticola (Downy mildew of grapevine).